Consider the following 126-residue polypeptide: Small ribosomal subunit protein uS13 (126 aa).

The tract at residues 99 to 126 (LRGQSTKNNARTRKGKKKTVANKKKATK) is disordered. Residues 108–126 (ARTRKGKKKTVANKKKATK) show a composition bias toward basic residues.

It belongs to the universal ribosomal protein uS13 family. Part of the 30S ribosomal subunit. Forms a loose heterodimer with protein S19. Forms two bridges to the 50S subunit in the 70S ribosome.

Located at the top of the head of the 30S subunit, it contacts several helices of the 16S rRNA. In the 70S ribosome it contacts the 23S rRNA (bridge B1a) and protein L5 of the 50S subunit (bridge B1b), connecting the 2 subunits; these bridges are implicated in subunit movement. Contacts the tRNAs in the A and P-sites. The chain is Small ribosomal subunit protein uS13 from Porphyromonas gingivalis (strain ATCC 33277 / DSM 20709 / CIP 103683 / JCM 12257 / NCTC 11834 / 2561).